Here is a 123-residue protein sequence, read N- to C-terminus: WAP four-disulfide core domain protein 5 (123 aa).

A signal peptide spans 1 to 24 (MRIQSLLLLGALLAVGSQPPAAFG). 2 consecutive WAP domains span residues 27–73 (KGEK…CVPR) and 74–121 (VSVK…RDPA). 8 disulfides stabilise this stretch: cysteine 34–cysteine 62, cysteine 41–cysteine 66, cysteine 49–cysteine 61, cysteine 55–cysteine 70, cysteine 81–cysteine 109, cysteine 88–cysteine 113, cysteine 96–cysteine 108, and cysteine 102–cysteine 117.

Its subcellular location is the secreted. Putative acid-stable proteinase inhibitor. The protein is WAP four-disulfide core domain protein 5 (WFDC5) of Saimiri boliviensis boliviensis (Bolivian squirrel monkey).